The following is a 124-amino-acid chain: Ribonuclease P protein component 2 (124 aa).

This sequence belongs to the eukaryotic/archaeal RNase P protein component 2 family. Consists of a catalytic RNA component and at least 4-5 protein subunits.

It is found in the cytoplasm. It carries out the reaction Endonucleolytic cleavage of RNA, removing 5'-extranucleotides from tRNA precursor.. Part of ribonuclease P, a protein complex that generates mature tRNA molecules by cleaving their 5'-ends. In Methanothermobacter thermautotrophicus (strain ATCC 29096 / DSM 1053 / JCM 10044 / NBRC 100330 / Delta H) (Methanobacterium thermoautotrophicum), this protein is Ribonuclease P protein component 2.